Here is a 508-residue protein sequence, read N- to C-terminus: Protein NODULATION SIGNALING PATHWAY 2 (508 aa).

The tract at residues 75 to 98 (ITTTTTTTTTTDEEEEEMETTTTT) is disordered. The GRAS domain occupies 108–500 (VGDDSKGLKL…RRLLSASLWT (393 aa)). The leucine repeat I (LRI) stretch occupies residues 115–190 (LKLVHLLMAG…NNHHHHNNNK (76 aa)). Residues 209-273 (FQLLQDMSPY…NNGPHLRITA (65 aa)) are VHIID. The short motif at 240-244 (VHVID) is the VHIID element. Positions 289-321 (ETGRRLTSFAASLGQPFSFHHCRLDSDETFRPS) are leucine repeat II (LRII). Residues 331–422 (LVFNCMLNLP…RVFFGPRIAG (92 aa)) are PFYRE. The tract at residues 425–500 (GRIYRTGGEE…RRLLSASLWT (76 aa)) is SAW.

Belongs to the GRAS family. In terms of assembly, interacts with RAM1. Interacts with IPN2 and RAD1. Expressed in roots, shoots and leaves.

The protein localises to the nucleus membrane. The protein resides in the endoplasmic reticulum. In terms of biological role, transcriptional regulator essential for Nod-factor-induced gene expression. Acts downstream of calcium spiking and DMI3, a calcium/calmodulin-dependent protein kinase (CCaMK). Transcription factor involved in the control of strigolactone biosynthesis in roots through the activation of the beta-carotene isomerase D27, which participates in a pathway leading to biosynthesis of strigolactones. The polypeptide is Protein NODULATION SIGNALING PATHWAY 2 (Medicago truncatula (Barrel medic)).